Consider the following 244-residue polypeptide: MNMRVFIFLIFAAASVSACGRLASVGQTPNLTSPADGNEVFAMNVVPIPDARDVPSRTEGASLWTSGRASLLGDRRASLRGDILTVVIEIDDSAEFSNSSERERSGSEQMGISNLFGLPQRVDGLLTQGGSLGEAVELDSASRSSGEGAIRRNEQLTLRVAATITEVLQNGVLRIEGSQEVRVNNEVRELLVTGYVRPEDISRQNAIEYDRIAAARISYGGRGLITDAQRPRYGQEIADTVLPF.

Positions 1 to 18 are cleaved as a signal peptide; that stretch reads MNMRVFIFLIFAAASVSA. Cysteine 19 is lipidated: N-palmitoyl cysteine. The S-diacylglycerol cysteine moiety is linked to residue cysteine 19.

The protein belongs to the FlgH family. In terms of assembly, the basal body constitutes a major portion of the flagellar organelle and consists of four rings (L,P,S, and M) mounted on a central rod.

Its subcellular location is the cell outer membrane. It is found in the bacterial flagellum basal body. Its function is as follows. Assembles around the rod to form the L-ring and probably protects the motor/basal body from shearing forces during rotation. The sequence is that of Flagellar L-ring protein from Jannaschia sp. (strain CCS1).